Consider the following 130-residue polypeptide: Small ribosomal subunit protein uS11c (130 aa).

It belongs to the universal ribosomal protein uS11 family. In terms of assembly, part of the 30S ribosomal subunit.

Its subcellular location is the plastid. It localises to the chloroplast. The sequence is that of Small ribosomal subunit protein uS11c from Physcomitrium patens (Spreading-leaved earth moss).